A 317-amino-acid chain; its full sequence is Ribonuclease Z (317 aa).

Residues H63, H65, D67, H68, H143, D213, and H273 each contribute to the Zn(2+) site. The active-site Proton acceptor is the D67.

It belongs to the RNase Z family. In terms of assembly, homodimer. The cofactor is Zn(2+).

It catalyses the reaction Endonucleolytic cleavage of RNA, removing extra 3' nucleotides from tRNA precursor, generating 3' termini of tRNAs. A 3'-hydroxy group is left at the tRNA terminus and a 5'-phosphoryl group is left at the trailer molecule.. In terms of biological role, zinc phosphodiesterase, which displays some tRNA 3'-processing endonuclease activity. Probably involved in tRNA maturation, by removing a 3'-trailer from precursor tRNA. The protein is Ribonuclease Z of Methanocaldococcus jannaschii (strain ATCC 43067 / DSM 2661 / JAL-1 / JCM 10045 / NBRC 100440) (Methanococcus jannaschii).